The chain runs to 601 residues: DNA replication licensing factor MCM3 (601 aa).

Residues 180-386 form the MCM domain; sequence PINLLSKSIA…LDRRLSQHVL (207 aa). 229 to 236 contacts ATP; it reads GDPSTAKS. The Arginine finger signature appears at 361–364; it reads SRFD.

Belongs to the MCM family. Component of the MCM2-7 complex.

It localises to the nucleus. It is found in the chromosome. Its subcellular location is the nucleoplasm. It catalyses the reaction ATP + H2O = ADP + phosphate + H(+). Functionally, acts as a component of the MCM2-7 complex (MCM complex) which is the replicative helicase essential for DNA replication initiation and elongation in eukaryotic cells. Required for DNA replication and cell proliferation. The active ATPase sites in the MCM2-7 ring are formed through the interaction surfaces of two neighboring subunits such that a critical structure of a conserved arginine finger motif is provided in trans relative to the ATP-binding site of the Walker A box of the adjacent subunit. The sequence is that of DNA replication licensing factor MCM3 from Entamoeba histolytica (strain ATCC 30459 / HM-1:IMSS / ABRM).